Reading from the N-terminus, the 268-residue chain is Short chain dehydrogenase/reductase dpchG (268 aa).

Positions 18, 70, 97, 131, 165, and 169 each coordinate NADP(+). Tyr-165 serves as the catalytic Proton acceptor. Catalysis depends on Lys-169, which acts as the Lowers pKa of active site Tyr.

The protein belongs to the short-chain dehydrogenases/reductases (SDR) family.

It participates in secondary metabolite biosynthesis; terpenoid biosynthesis. In terms of biological role, short chain dehydrogenase/reductase; part of the gene cluster that mediates the biosynthesis of the diterpenoid pyrones higginsianins A and B. The first step of the pathway is the synthesis of the alpha-pyrone moiety by the polyketide synthase dpchA via condensation of one acetyl-CoA starter unit with 3 malonyl-CoA units and 2 methylations. The alpha-pyrone is then combined with geranylgeranyl pyrophosphate (GGPP) formed by the GGPP synthase dpchD through the action of the prenyltransferase dpchC to yield a linear alpha-pyrone diterpenoid. Subsequent steps in the diterpenoid pyrone biosynthetic pathway involve the decalin core formation, which is initiated by the epoxidation of the C10-C11 olefin by the FAD-dependent oxidoreductase dpchE, and is followed by a cyclization cascade catalyzed by the terpene cyclase dpchB. The short chain dehydrogenase/reductase dpchG then oxidizes the 8S hydroxy group to a ketone and the short chain dehydrogenase/reductase dpchH reduces the ketone to the 8R hydroxy group to yield higginsianin B. Finally, the FAD-dependent oxidoreductase dpchF converts higginsianin B into higginsianin A. In Colletotrichum higginsianum (strain IMI 349063) (Crucifer anthracnose fungus), this protein is Short chain dehydrogenase/reductase dpchG.